Reading from the N-terminus, the 298-residue chain is Putative enoyl-CoA reductase (298 aa).

The next 4 helical transmembrane spans lie at 162–182, 189–209, 229–249, and 254–274; these read CVYYWTFALGIGYALCSPYYT, LVNASAVAMVIFELLNFAVHV, ILFSLVSCPNYLFEILSWVAF, and SMLTSWGFTFAGLVQMAEWAV.

This sequence belongs to the steroid 5-alpha reductase family.

It is found in the membrane. Its pathway is lipid metabolism; fatty acid biosynthesis. Involved in the synthesis of fatty acids. The polypeptide is Putative enoyl-CoA reductase (Trypanosoma brucei brucei (strain 927/4 GUTat10.1)).